The primary structure comprises 353 residues: Protein-glutamate methylesterase/protein-glutamine glutaminase 3 (353 aa).

In terms of domain architecture, Response regulatory spans 3–120; sequence KVLIADDSAL…SSSSDMKKVA (118 aa). Asp-54 bears the 4-aspartylphosphate mark. One can recognise a CheB-type methylesterase domain in the interval 158-353; the sequence is PRPGREVTKA…AREIIRAVNR (196 aa). Active-site residues include Ser-173, His-200, and Asp-296.

This sequence belongs to the CheB family. Post-translationally, phosphorylated by CheA. Phosphorylation of the N-terminal regulatory domain activates the methylesterase activity.

It localises to the cytoplasm. The enzyme catalyses [protein]-L-glutamate 5-O-methyl ester + H2O = L-glutamyl-[protein] + methanol + H(+). It catalyses the reaction L-glutaminyl-[protein] + H2O = L-glutamyl-[protein] + NH4(+). Its function is as follows. Involved in chemotaxis. Part of a chemotaxis signal transduction system that modulates chemotaxis in response to various stimuli. Catalyzes the demethylation of specific methylglutamate residues introduced into the chemoreceptors (methyl-accepting chemotaxis proteins or MCP) by CheR. Also mediates the irreversible deamidation of specific glutamine residues to glutamic acid. This Syntrophomonas wolfei subsp. wolfei (strain DSM 2245B / Goettingen) protein is Protein-glutamate methylesterase/protein-glutamine glutaminase 3.